The chain runs to 195 residues: MKKKETAWMKRKQLLYTEERKWEYGTILIEDGICLIENGEGDILLADSLQHSPIWIHHKGKWEQAGFQDKLVLACGAENISLSGGERIRYEKSVKRPLMALLDSLDDETFLAFLQHLHSFGLSVFDCVFSYNKGVFSNTSAGQGVSFYHFSNDTAQCAMQHHYNYSSEGTGDRFEWTASNGKRSIMYTAVQRGRK.

This is an uncharacterized protein from Bacillus subtilis (strain 168).